The primary structure comprises 67 residues: Large ribosomal subunit protein uL29 (67 aa).

The protein belongs to the universal ribosomal protein uL29 family.

This chain is Large ribosomal subunit protein uL29, found in Desulforudis audaxviator (strain MP104C).